Reading from the N-terminus, the 433-residue chain is Phosphomethylpyrimidine synthase (433 aa).

Substrate contacts are provided by residues Asn69, Met98, Tyr127, His163, 185–187, 226–229, and Glu265; these read SRG and DALR. Position 269 (His269) interacts with Zn(2+). Substrate is bound at residue Tyr292. Residue His333 participates in Zn(2+) binding. Residues Cys409, Cys412, and Cys416 each coordinate [4Fe-4S] cluster.

The protein belongs to the ThiC family. The cofactor is [4Fe-4S] cluster.

It catalyses the reaction 5-amino-1-(5-phospho-beta-D-ribosyl)imidazole + S-adenosyl-L-methionine = 4-amino-2-methyl-5-(phosphooxymethyl)pyrimidine + CO + 5'-deoxyadenosine + formate + L-methionine + 3 H(+). The protein operates within cofactor biosynthesis; thiamine diphosphate biosynthesis. Its function is as follows. Catalyzes the synthesis of the hydroxymethylpyrimidine phosphate (HMP-P) moiety of thiamine from aminoimidazole ribotide (AIR) in a radical S-adenosyl-L-methionine (SAM)-dependent reaction. This Finegoldia magna (strain ATCC 29328 / DSM 20472 / WAL 2508) (Peptostreptococcus magnus) protein is Phosphomethylpyrimidine synthase.